The chain runs to 317 residues: tRNA dimethylallyltransferase (317 aa).

Residue 14 to 21 (GPTAVGKT) coordinates ATP. Residue 16–21 (TAVGKT) coordinates substrate. The interval 39 to 42 (DSMQ) is interaction with substrate tRNA.

Belongs to the IPP transferase family. Monomer. The cofactor is Mg(2+).

It catalyses the reaction adenosine(37) in tRNA + dimethylallyl diphosphate = N(6)-dimethylallyladenosine(37) in tRNA + diphosphate. Functionally, catalyzes the transfer of a dimethylallyl group onto the adenine at position 37 in tRNAs that read codons beginning with uridine, leading to the formation of N6-(dimethylallyl)adenosine (i(6)A). This is tRNA dimethylallyltransferase from Bacillus cereus (strain G9842).